We begin with the raw amino-acid sequence, 192 residues long: Erythropoietin (192 aa).

An N-terminal signal peptide occupies residues 1–26 (MGVPDCLALPLLVTFLLLSLGLPVLG). The cysteines at positions 33 and 187 are disulfide-linked. N50, N64, and N109 each carry an N-linked (GlcNAc...) asparagine glycan.

This sequence belongs to the EPO/TPO family.

The protein resides in the secreted. Hormone involved in the regulation of erythrocyte proliferation and differentiation and the maintenance of a physiological level of circulating erythrocyte mass. Binds to EPOR leading to EPOR dimerization and JAK2 activation thereby activating specific downstream effectors, including STAT1 and STAT3. This chain is Erythropoietin (EPO), found in Spalax golani (Golan Heights blind mole rat).